Here is a 309-residue protein sequence, read N- to C-terminus: 2-dehydro-3-deoxygluconokinase (309 aa).

Substrate-binding positions include 34 to 38, tyrosine 89, 103 to 105, and arginine 167; these read GAEVN and YYR. Residues 165–167, serine 193, 219–225, 248–251, and asparagine 275 each bind ATP; these read NYR, KRGAKGA, and GAGD. Substrate is bound at residue aspartate 251. The Proton acceptor role is filled by aspartate 251. Aspartate 287 contributes to the substrate binding site.

The protein belongs to the carbohydrate kinase pfkB family. As to quaternary structure, homohexamer; trimer of dimers.

The catalysed reaction is 2-dehydro-3-deoxy-D-gluconate + ATP = 2-dehydro-3-deoxy-6-phospho-D-gluconate + ADP + H(+). It functions in the pathway carbohydrate acid metabolism; 2-dehydro-3-deoxy-D-gluconate degradation; D-glyceraldehyde 3-phosphate and pyruvate from 2-dehydro-3-deoxy-D-gluconate: step 1/2. Functionally, involved in the degradation of glucose via the semi-phosphorylative Entner-Doudoroff pathway. Catalyzes the phosphorylation of 2-keto-3-deoxygluconate (KDG) to produce 2-keto-3-deoxy-6-phosphogluconate (KDPG). This Thermus thermophilus (strain ATCC 27634 / DSM 579 / HB8) protein is 2-dehydro-3-deoxygluconokinase (kdgK).